Reading from the N-terminus, the 199-residue chain is Peroxiredoxin-1 (199 aa).

N-acetylserine is present on serine 2. One can recognise a Thioredoxin domain in the interval 6 to 165; that stretch reads AKIGHRAPQF…TLRLVQAFQF (160 aa). Lysine 7 is modified (N6-acetyllysine; alternate). Lysine 7 is covalently cross-linked (Glycyl lysine isopeptide (Lys-Gly) (interchain with G-Cter in SUMO2); alternate). 2 positions are modified to N6-acetyllysine: lysine 16 and lysine 27. N6-acetyllysine; alternate is present on lysine 35. Residue lysine 35 is modified to N6-succinyllysine; alternate. Cysteine 52 functions as the Cysteine sulfenic acid (-SOH) intermediate in the catalytic mechanism. Threonine 90 carries the phosphothreonine modification. Lysine 120 is covalently cross-linked (Glycyl lysine isopeptide (Lys-Gly) (interchain with G-Cter in SUMO2)). The residue at position 136 (lysine 136) is an N6-acetyllysine. Positions 176–199 are disordered; sequence GWKPGSDTIKPDVQKSKEYFSKQK. Over residues 184 to 199 the composition is skewed to basic and acidic residues; the sequence is IKPDVQKSKEYFSKQK. Lysine 185 is covalently cross-linked (Glycyl lysine isopeptide (Lys-Gly) (interchain with G-Cter in SUMO1)). Lysine 197 carries the N6-acetyllysine modification.

Belongs to the peroxiredoxin family. AhpC/Prx1 subfamily. In terms of assembly, homodimer; disulfide-linked, upon oxidation. 5 homodimers assemble to form a ring-like decamer. Interacts with GDPD5; forms a mixed-disulfide with GDPD5. Interacts with SESN1 and SESN2. Interacts with FAM107A. Post-translationally, phosphorylated on Thr-90 during the M-phase, which leads to a decrease in enzymatic activity. Acetylation increases reducing activity and resistance to superoxidation. Deacetylated by HDAC6 which decreases reducing activity.

It localises to the cytoplasm. It catalyses the reaction a hydroperoxide + [thioredoxin]-dithiol = an alcohol + [thioredoxin]-disulfide + H2O. Its function is as follows. Thiol-specific peroxidase that catalyzes the reduction of hydrogen peroxide and organic hydroperoxides to water and alcohols, respectively. Plays a role in cell protection against oxidative stress by detoxifying peroxides and as sensor of hydrogen peroxide-mediated signaling events. Might participate in the signaling cascades of growth factors and tumor necrosis factor-alpha by regulating the intracellular concentrations of H(2)O(2). Reduces an intramolecular disulfide bond in GDPD5 that gates the ability to GDPD5 to drive postmitotic motor neuron differentiation. In Bos taurus (Bovine), this protein is Peroxiredoxin-1 (PRDX1).